A 92-amino-acid chain; its full sequence is Calitoxin (92 aa).

An N-terminal signal peptide occupies residues 1–20 (MKTQVLVVLVLCVVFCLAES). Residues 21–42 (RNSMTSEERGLVSLMRQRDDIA) constitute a propeptide that is removed on maturation. 3 cysteine pairs are disulfide-bonded: cysteine 47–cysteine 86, cysteine 49–cysteine 77, and cysteine 67–cysteine 87.

This sequence belongs to the sea anemone sodium channel inhibitory toxin family. Expressed both outside and in acontia, a specialised envenomation structure laden with batteries of venom-containing nematocysts found only in the superfamily Metridioidea.

It localises to the secreted. Its subcellular location is the nematocyst. In terms of biological role, in neuromuscular preparation of crustaceans, the toxin increased neurotransmitter release, causing repetitive firing of the axons. May affect sodium channels (Nav). The polypeptide is Calitoxin (Calliactis polypus (Hermit crab anemone)).